A 348-amino-acid chain; its full sequence is Rhodopsin (348 aa).

Met1 carries the N-acetylmethionine modification. Over 1–36 the chain is Extracellular; it reads MNGTEGPNFYVPFSNATGVVRSPFEYPQYYLAEPWQ. N-linked (GlcNAc...) asparagine glycosylation is found at Asn2 and Asn15. A helical membrane pass occupies residues 37-61; it reads FSMLAAYMFLLIVLGFPINFLTLYV. Residues 62-73 lie on the Cytoplasmic side of the membrane; sequence TVQHKKLRTPLN. Residues 74–96 form a helical membrane-spanning segment; the sequence is YILLNLAVADLFMVLGGFTSTLY. The Extracellular portion of the chain corresponds to 97–110; it reads TSLHGYFVFGPTGC. Cys110 and Cys187 are oxidised to a cystine. The chain crosses the membrane as a helical span at residues 111–133; that stretch reads NLEGFFATLGGEIALWSLVVLAI. Positions 134–136 match the 'Ionic lock' involved in activated form stabilization motif; sequence ERY. The Cytoplasmic portion of the chain corresponds to 134–152; that stretch reads ERYVVVCKPMSNFRFGENH. The helical transmembrane segment at 153 to 173 threads the bilayer; it reads AIMGVAFTWVMALACAAPPLA. Residues 174 to 202 are Extracellular-facing; the sequence is GWSRYIPEGLQCSCGIDYYTLKPEVNNES. Glu201 contributes to the Zn(2+) binding site. A helical membrane pass occupies residues 203–224; it reads FVIYMFVVHFTIPMIIIFFCYG. Residues 225 to 252 lie on the Cytoplasmic side of the membrane; sequence QLVFTVKEAAAQQQESATTQKAEKEVTR. A helical transmembrane segment spans residues 253 to 274; that stretch reads MVIIMVIAFLICWVPYASVAFY. Topologically, residues 275–284 are extracellular; the sequence is IFTHQGSNFG. Residue Gln279 coordinates Zn(2+). A helical transmembrane segment spans residues 285-309; sequence PIFMTIPAFFAKSAAIYNPVIYIMM. The residue at position 296 (Lys296) is an N6-(retinylidene)lysine. The Cytoplasmic portion of the chain corresponds to 310-348; the sequence is NKQFRNCMLTTICCGKNPLGDDEASATVSKTETSQVAPA. Residues Cys322 and Cys323 are each lipidated (S-palmitoyl cysteine). Residues 330–348 form an interaction with SAG region; it reads DDEASATVSKTETSQVAPA. Ser334 carries the phosphoserine modification. Phosphothreonine is present on Thr336. Phosphoserine is present on Ser338. Residues Thr340 and Thr342 each carry the phosphothreonine modification. Ser343 carries the post-translational modification Phosphoserine.

This sequence belongs to the G-protein coupled receptor 1 family. Opsin subfamily. In terms of assembly, homodimer. May form a complex composed of RHO, GRK1 and RCVRN in a Ca(2+)-dependent manner; RCVRN prevents the interaction between GRK1 and RHO. Interacts with GRK1. Interacts (phosphorylated form) with SAG. Interacts with GNAT1. Interacts with GNAT3. SAG and G-proteins compete for a common binding site. Interacts with PRCD; the interaction promotes PRCD stability. Forms a complex with ASAP1 and ARF4. Forms a complex with ASAP1, RAB11A, Rabin8/RAB3IP, ARF4 and RAB11FIP3; the complex regulates Golgi-to-cilia rhodopsin/RHO transport in photoreceptors. In terms of processing, phosphorylated on some or all of the serine and threonine residues present in the C-terminal region. After activation by light, phosphorylated by GRK1 (in vitro). Post-translationally, contains one covalently linked retinal chromophore. Upon light absorption, the covalently bound 11-cis-retinal is converted to all-trans-retinal. After hydrolysis of the Schiff base and release of the covalently bound all-trans-retinal, active rhodopsin is regenerated by binding of a fresh molecule of 11-cis-retinal. As to expression, rod shaped photoreceptor cells which mediate vision in dim light.

Its subcellular location is the membrane. It localises to the cell projection. The protein resides in the cilium. It is found in the photoreceptor outer segment. Functionally, photoreceptor required for image-forming vision at low light intensity. Required for photoreceptor cell viability after birth. Light-induced isomerization of the chromophore 11-cis-retinal to all-trans-retinal triggers a conformational change that activates signaling via G-proteins. Subsequent receptor phosphorylation mediates displacement of the bound G-protein alpha subunit by the arrestin SAG and terminates signaling. The sequence is that of Rhodopsin (RHO) from Homo sapiens (Human).